A 144-amino-acid chain; its full sequence is D-aminoacyl-tRNA deacylase (144 aa).

The Gly-cisPro motif, important for rejection of L-amino acids signature appears at 136 to 137 (GP).

This sequence belongs to the DTD family. Homodimer.

The protein resides in the cytoplasm. It catalyses the reaction glycyl-tRNA(Ala) + H2O = tRNA(Ala) + glycine + H(+). The catalysed reaction is a D-aminoacyl-tRNA + H2O = a tRNA + a D-alpha-amino acid + H(+). An aminoacyl-tRNA editing enzyme that deacylates mischarged D-aminoacyl-tRNAs. Also deacylates mischarged glycyl-tRNA(Ala), protecting cells against glycine mischarging by AlaRS. Acts via tRNA-based rather than protein-based catalysis; rejects L-amino acids rather than detecting D-amino acids in the active site. By recycling D-aminoacyl-tRNA to D-amino acids and free tRNA molecules, this enzyme counteracts the toxicity associated with the formation of D-aminoacyl-tRNA entities in vivo and helps enforce protein L-homochirality. The polypeptide is D-aminoacyl-tRNA deacylase (Mannheimia succiniciproducens (strain KCTC 0769BP / MBEL55E)).